The sequence spans 336 residues: Glycerol-3-phosphate dehydrogenase [NAD(P)+] (336 aa).

Residues S11, W12, R32, and K109 each coordinate NADPH. 3 residues coordinate sn-glycerol 3-phosphate: K109, G140, and S142. A144 contacts NADPH. Sn-glycerol 3-phosphate is bound by residues K195, D248, S258, R259, and N260. K195 acts as the Proton acceptor in catalysis. R259 contributes to the NADPH binding site. 2 residues coordinate NADPH: V283 and E285.

Belongs to the NAD-dependent glycerol-3-phosphate dehydrogenase family.

Its subcellular location is the cytoplasm. The catalysed reaction is sn-glycerol 3-phosphate + NAD(+) = dihydroxyacetone phosphate + NADH + H(+). The enzyme catalyses sn-glycerol 3-phosphate + NADP(+) = dihydroxyacetone phosphate + NADPH + H(+). The protein operates within membrane lipid metabolism; glycerophospholipid metabolism. Its function is as follows. Catalyzes the reduction of the glycolytic intermediate dihydroxyacetone phosphate (DHAP) to sn-glycerol 3-phosphate (G3P), the key precursor for phospholipid synthesis. The polypeptide is Glycerol-3-phosphate dehydrogenase [NAD(P)+] (Leuconostoc mesenteroides subsp. mesenteroides (strain ATCC 8293 / DSM 20343 / BCRC 11652 / CCM 1803 / JCM 6124 / NCDO 523 / NBRC 100496 / NCIMB 8023 / NCTC 12954 / NRRL B-1118 / 37Y)).